We begin with the raw amino-acid sequence, 213 residues long: Putative 3-methyladenine DNA glycosylase (213 aa).

The protein belongs to the DNA glycosylase MPG family.

This is Putative 3-methyladenine DNA glycosylase from Latilactobacillus sakei subsp. sakei (strain 23K) (Lactobacillus sakei subsp. sakei).